We begin with the raw amino-acid sequence, 99 residues long: UPF0213 protein PC1_0597 (99 aa).

The region spanning 8–83 (PQWYLYILRT…KQLSKNQKER (76 aa)) is the GIY-YIG domain.

It belongs to the UPF0213 family.

This chain is UPF0213 protein PC1_0597, found in Pectobacterium carotovorum subsp. carotovorum (strain PC1).